Reading from the N-terminus, the 152-residue chain is Mediator of RNA polymerase II transcription subunit 9 (152 aa).

A coiled-coil region spans residues 98 to 150 (IKRCKALLQENEEVRNLLANSIEEWENIIADKEQQLRVKAKVLRDLDARIEKI).

It belongs to the Mediator complex subunit 9 family. As to quaternary structure, component of the Mediator complex.

It is found in the nucleus. Component of the Mediator complex, a coactivator involved in the regulated transcription of nearly all RNA polymerase II-dependent genes. Mediator functions as a bridge to convey information from gene-specific regulatory proteins to the basal RNA polymerase II transcription machinery. Mediator is recruited to promoters by direct interactions with regulatory proteins and serves as a scaffold for the assembly of a functional preinitiation complex with RNA polymerase II and the general transcription factors. The chain is Mediator of RNA polymerase II transcription subunit 9 (CSE2) from Candida glabrata (strain ATCC 2001 / BCRC 20586 / JCM 3761 / NBRC 0622 / NRRL Y-65 / CBS 138) (Yeast).